A 157-amino-acid polypeptide reads, in one-letter code: Protein Smg homolog (157 aa).

This sequence belongs to the Smg family.

This Stenotrophomonas maltophilia (strain R551-3) protein is Protein Smg homolog.